Reading from the N-terminus, the 341-residue chain is MNVKDFDFYLPEELIAQHPLEKRDTSRLMVLDKETGEISHKNFYDIIDYLNEGDTLVLNNTRVMPARLIGEKEGTGGKIEFLLLKRVDKDRWECLAKPGKSARVGRRFTFGDGKLKAEVVEVKENGNRIVEFYYEGIFEEVLDSLGEMPLPPYIHERLEDRERYQTVYSKENGSAAAPTAGLHFTEELLHKIKEKGINIAYVTLHVGLGTFRPVKVETIEDHEMHSEYYHLSKEDAEVINETKKRGNRVISVGTTSTRTLETIADEDGNVKETSGWTNIFIYPGYKFKVVDRLITNFHLPESTLIMLVSTLAGKEHVMNAYEEAVKERYRFFSFGDAMFIK.

Belongs to the QueA family. Monomer.

Its subcellular location is the cytoplasm. It catalyses the reaction 7-aminomethyl-7-carbaguanosine(34) in tRNA + S-adenosyl-L-methionine = epoxyqueuosine(34) in tRNA + adenine + L-methionine + 2 H(+). It functions in the pathway tRNA modification; tRNA-queuosine biosynthesis. Functionally, transfers and isomerizes the ribose moiety from AdoMet to the 7-aminomethyl group of 7-deazaguanine (preQ1-tRNA) to give epoxyqueuosine (oQ-tRNA). The polypeptide is S-adenosylmethionine:tRNA ribosyltransferase-isomerase (Clostridium botulinum (strain Alaska E43 / Type E3)).